A 133-amino-acid polypeptide reads, in one-letter code: ATP synthase epsilon chain, chloroplastic (133 aa).

This sequence belongs to the ATPase epsilon chain family. In terms of assembly, F-type ATPases have 2 components, CF(1) - the catalytic core - and CF(0) - the membrane proton channel. CF(1) has five subunits: alpha(3), beta(3), gamma(1), delta(1), epsilon(1). CF(0) has three main subunits: a, b and c.

Its subcellular location is the plastid. The protein resides in the chloroplast thylakoid membrane. In terms of biological role, produces ATP from ADP in the presence of a proton gradient across the membrane. The chain is ATP synthase epsilon chain, chloroplastic from Morus indica (Mulberry).